A 959-amino-acid polypeptide reads, in one-letter code: MALLGKRCDVPTNGCGPDRWNSAFTRKDEIITSLVSALDSMCSALSKLNAEVACVAVHDESAFVVGTEKGRMFLNARKELQSDFLRFCRGPPWKDPEAEHPKKVQRGEGGGRSLPRSSLEHGSDVYLLRKMVEEVFDVLYSEALGRASVVPLPYERLLREPGLLAVQGLPEGLAFRRPAEYDPKALMAILEHSHRIRFKLKRPLEDGGRDSKALVELNGVSLIPKGSRDCGLHGQAPKVPPQDLPPTATSSSMASFLYSTALPNHAIRELKQEAPSCPLAPSDLGLSRPMPEPKATGAQDFSDCCGQKPTGPGGPLIQNVHASKRILFSIVHDKSEKWDAFIKETEDINTLRECVQILFNSRYAEALGLDHMVPVPYRKIACDPEAVEIVGIPDKIPFKRPCTYGVPKLKRILEERHSIHFIIKRMFDERIFTGNKFTKDTTKLEPASPPEDTSAEVSRATVLDLAGNARSDKGSMSEDCGPGTSGELGGLRPIKIEPEDLDIIQVTVPDPSPTSEEMTDSMPGHLPSEDSGYGMEMLTDKGLSEDARPEERPVEDSHGDVIRPLRKQVELLFNTRYAKAIGISEPVKVPYSKFLMHPEELFVVGLPEGISLRRPNCFGIAKLRKILEASNSIQFVIKRPELLTEGVKEPIMDSQGTASSLGFSPPALPPERDSGDPLVDESLKRQGFQENYDARLSRIDIANTLREQVQDLFNKKYGEALGIKYPVQVPYKRIKSNPGSVIIEGLPPGIPFRKPCTFGSQNLERILAVADKIKFTVTRPFQGLIPKPDEDDANRLGEKVILREQVKELFNEKYGEALGLNRPVLVPYKLIRDSPDAVEVTGLPDDIPFRNPNTYDIHRLEKILKAREHVRMVIINQLQPFAEICNDAKVPAKDSSIPKRKRKRVSEGNSVSSSSSSSSSSSSNPDSVASANQISLVQWPMYMVDYAGLNVQLPGPLNY.

Residues lysine 27 and lysine 94 each participate in a glycyl lysine isopeptide (Lys-Gly) (interchain with G-Cter in SUMO2) cross-link. A compositionally biased stretch (basic and acidic residues) spans 96-106 (PEAEHPKKVQR). A disordered region spans residues 96 to 117 (PEAEHPKKVQRGEGGGRSLPRS). Residues 119-213 (LEHGSDVYLL…LEDGGRDSKA (95 aa)) form a GTF2I-like 1 repeat. Glycyl lysine isopeptide (Lys-Gly) (interchain with G-Cter in SUMO2) cross-links involve residues lysine 184, lysine 212, lysine 225, lysine 238, lysine 271, lysine 294, lysine 308, lysine 337, lysine 436, lysine 439, and lysine 443. Residues 230–250 (CGLHGQAPKVPPQDLPPTATS) are disordered. A GTF2I-like 2 repeat occupies 342-436 (IKETEDINTL…FDERIFTGNK (95 aa)). Serine 448 carries the post-translational modification Phosphoserine. The interval 468–492 (NARSDKGSMSEDCGPGTSGELGGLR) is disordered. A GTF2I-like 3 repeat occupies 556-650 (DSHGDVIRPL…ELLTEGVKEP (95 aa)). Residues lysine 567, lysine 579, lysine 588, lysine 622, lysine 638, and lysine 648 each participate in a glycyl lysine isopeptide (Lys-Gly) (interchain with G-Cter in SUMO2) cross-link. Serine 654 carries the post-translational modification Phosphoserine. A disordered region spans residues 654–679 (SQGTASSLGFSPPALPPERDSGDPLV). Residues proline 669, proline 670, aspartate 680, and lysine 684 each participate in a glycyl lysine isopeptide (Lys-Gly) (interchain with G-Cter in SUMO2) cross-link. The residue at position 686 (glutamine 686) is a Phosphoserine. GTF2I-like repeat units lie at residues 696 to 790 (LSRI…KPDE) and 793 to 887 (ANRL…ICND). Residues isoleucine 701, lysine 724, lysine 732, lysine 772, lysine 774, lysine 787, lysine 829, lysine 889, and lysine 893 each participate in a glycyl lysine isopeptide (Lys-Gly) (interchain with G-Cter in SUMO2) cross-link. The segment at 892-927 (AKDSSIPKRKRKRVSEGNSVSSSSSSSSSSSSNPDS) is disordered. A Nuclear localization signal motif is present at residues 898–905 (PKRKRKRV). Over residues 910–923 (SVSSSSSSSSSSSS) the composition is skewed to low complexity.

This sequence belongs to the TFII-I family. As to quaternary structure, interacts with the retinoblastoma protein (RB1) via its C-terminus. As to expression, highly expressed in adult skeletal muscle, heart, fibroblast, bone and fetal tissues. Expressed at lower levels in all other tissues tested.

Its subcellular location is the nucleus. Its function is as follows. May be a transcription regulator involved in cell-cycle progression and skeletal muscle differentiation. May repress GTF2I transcriptional functions, by preventing its nuclear residency, or by inhibiting its transcriptional activation. May contribute to slow-twitch fiber type specificity during myogenesis and in regenerating muscles. Binds troponin I slow-muscle fiber enhancer (USE B1). Binds specifically and with high affinity to the EFG sequences derived from the early enhancer of HOXC8. The polypeptide is General transcription factor II-I repeat domain-containing protein 1 (GTF2IRD1) (Homo sapiens (Human)).